The sequence spans 319 residues: Chromoplast-specific carotenoid-associated protein C2, chromoplastic (319 aa).

The transit peptide at 1–55 directs the protein to the chromoplast; that stretch reads MTSIAFCNAFTVNPFLAAARRSPPPLTPLTSVALSPARKPRILAIFHPRTFPSFR.

It belongs to the PAP/fibrillin family.

Its subcellular location is the plastid. The protein localises to the chromoplast. Functionally, may be involved in carotenoid sequestration within chromoplasts. The chain is Chromoplast-specific carotenoid-associated protein C2, chromoplastic (CHRC2) from Oncidium hybrid cultivar (Orchid).